Consider the following 384-residue polypeptide: Actin-related protein 2/3 complex subunit 1 (384 aa).

WD repeat units follow at residues 61–99 (DHDKTITAVDISIHGRIVTCSQDRNAYVWEPLSDGTYKP), 105–146 (RINR…WVSK), 151–190 (PIKSTINCLSWHANGVLLAAGGTDGFMRVFSGFIKGLDSK), 212–251 (YQGSYIHDVEWRSQMERIAYVAHDGTLNVVDYQSPVQSVN), and 349–383 (AHENAIVELRPFAESNGQITQVSSCGLDGKIVIYT).

This sequence belongs to the WD repeat ARPC1 family. Component of the Arp2/3 complex composed of ARP2, ARP3, ARC40/p41-ARC, ARC35/p34-ARC, ARC18/p21-ARC, ARC19/p20-ARC and ARC16/p16-ARC.

The protein resides in the cytoplasm. Its subcellular location is the cytoskeleton. The protein localises to the actin patch. Its function is as follows. Functions as a component of the Arp2/3 complex which is involved in regulation of actin polymerization and together with an activating nucleation-promoting factor (NPF) mediates the formation of branched actin networks. The protein is Actin-related protein 2/3 complex subunit 1 (ARC40) of Saccharomyces cerevisiae (strain ATCC 204508 / S288c) (Baker's yeast).